A 455-amino-acid chain; its full sequence is C4-dicarboxylate transport protein (455 aa).

A run of 8 helical transmembrane segments spans residues 20 to 40, 59 to 79, 91 to 111, 160 to 180, 209 to 229, 231 to 251, 344 to 364, and 367 to 387; these read HLYFQVLCAIVAGALIGHFYP, MIIAPVIFLTIVTGLAGMGTL, GYFLTFSTLALVVGLITANVI, GNILQVLFVAILFGIGLILIG, PIGAFGAFAFTIGKYGIASVV, LATLVGTFYLTSALFVIVVLG, LLLVAMLSSKGAAGVTGAGFI, and AATLSVVPTVPVAGMALILGV.

The protein belongs to the dicarboxylate/amino acid:cation symporter (DAACS) (TC 2.A.23) family.

It is found in the cell inner membrane. Responsible for the transport of dicarboxylates such as succinate, fumarate, and malate from the periplasm across the membrane. This Paracoccus denitrificans (strain Pd 1222) protein is C4-dicarboxylate transport protein.